Here is a 617-residue protein sequence, read N- to C-terminus: Tetratricopeptide repeat protein 39B (617 aa).

TPR repeat units follow at residues S328–W361, C520–L553, and P561–Y594.

Belongs to the TTC39 family. As to expression, high expression in lung and spleen. Low lower expression in liver and small intestine. Weak expression in heart, brain, kidney, adipose, and adrenal gland.

Regulates high density lipoprotein (HDL) cholesterol metabolism by promoting the ubiquitination and degradation of the oxysterols receptors LXR (NR1H2 and NR1H3). The chain is Tetratricopeptide repeat protein 39B from Mus musculus (Mouse).